We begin with the raw amino-acid sequence, 440 residues long: Thymidine phosphorylase (440 aa).

This sequence belongs to the thymidine/pyrimidine-nucleoside phosphorylase family. As to quaternary structure, homodimer.

The enzyme catalyses thymidine + phosphate = 2-deoxy-alpha-D-ribose 1-phosphate + thymine. It participates in pyrimidine metabolism; dTMP biosynthesis via salvage pathway; dTMP from thymine: step 1/2. Its function is as follows. The enzymes which catalyze the reversible phosphorolysis of pyrimidine nucleosides are involved in the degradation of these compounds and in their utilization as carbon and energy sources, or in the rescue of pyrimidine bases for nucleotide synthesis. The polypeptide is Thymidine phosphorylase (Yersinia enterocolitica serotype O:8 / biotype 1B (strain NCTC 13174 / 8081)).